A 141-amino-acid polypeptide reads, in one-letter code: MAVQRTFSIIKPDAVAKNVIGEITTRFEKAGLRVVASKLKQLSKAEAEGFYAEHSARGFFGDLVAFMISGPVVVQVLEGENAIALNRELMGATNPKEAAAGTIRADFADSIDANAVHGSDSEAAAAREISYFFAATEVTAR.

Residues Lys-11, Phe-59, Arg-87, Thr-93, Arg-104, and Asn-114 each coordinate ATP. Residue His-117 is the Pros-phosphohistidine intermediate of the active site.

This sequence belongs to the NDK family. In terms of assembly, homotetramer. It depends on Mg(2+) as a cofactor.

It localises to the cytoplasm. The catalysed reaction is a 2'-deoxyribonucleoside 5'-diphosphate + ATP = a 2'-deoxyribonucleoside 5'-triphosphate + ADP. The enzyme catalyses a ribonucleoside 5'-diphosphate + ATP = a ribonucleoside 5'-triphosphate + ADP. Its function is as follows. Major role in the synthesis of nucleoside triphosphates other than ATP. The ATP gamma phosphate is transferred to the NDP beta phosphate via a ping-pong mechanism, using a phosphorylated active-site intermediate. The sequence is that of Nucleoside diphosphate kinase from Pseudomonas syringae pv. tomato (strain ATCC BAA-871 / DC3000).